Reading from the N-terminus, the 138-residue chain is Transcriptional regulator MraZ (138 aa).

SpoVT-AbrB domains lie at 3 to 45 (EFQH…PLAE) and 74 to 117 (ATEC…AAER).

Belongs to the MraZ family. As to quaternary structure, forms oligomers.

It localises to the cytoplasm. The protein resides in the nucleoid. The chain is Transcriptional regulator MraZ from Symbiobacterium thermophilum (strain DSM 24528 / JCM 14929 / IAM 14863 / T).